A 424-amino-acid chain; its full sequence is Putative chloroquine resistance transporter (424 aa).

Over 1-57 the chain is Cytoplasmic; that stretch reads MKILKKKKKGNQQIVPDERYRELDSHAPNENEIADEAPMSRKILYYLKLVYHEIREN. Residues 58–78 traverse the membrane as a helical segment; that stretch reads ITIYLLIILYLCVCVMNKIMA. Residues 79 to 89 are Vacuolar-facing; sequence KRTLKKIGNYS. A glycan (N-linked (GlcNAc...) asparagine) is linked at Asn-87. Residues 90–110 form a helical membrane-spanning segment; the sequence is FVTSETHNTICMVVFFSLYFI. Over 111–124 the chain is Cytoplasmic; sequence FGRRVTSAKERHQN. Residues 125-145 traverse the membrane as a helical segment; sequence FGLQFLLISLLDACSVIIAFI. The Vacuolar portion of the chain corresponds to 146–153; it reads GLTRTTGN. The helical transmembrane segment at 154–174 threads the bilayer; that stretch reads IQSFVMQLSIPINMFFCFLIL. Over 175–179 the chain is Cytoplasmic; it reads RYRYH. The helical transmembrane segment at 180-200 threads the bilayer; the sequence is LFNYVGASIIVLTIAIVEFIL. Residues 201-208 lie on the Vacuolar side of the membrane; the sequence is SFETQEEN. The helical transmembrane segment at 209-229 threads the bilayer; the sequence is SIVFNLVLIASLIPMSFSNMT. At 230–246 the chain is on the cytoplasmic side; it reads REIVFKKYKINILRLNA. Residues 247–267 form a helical membrane-spanning segment; sequence VVSFFQIFTSCLMLPMYTLPF. Over 268–316 the chain is Vacuolar; sequence LKQINLPFSEIGTNIKNGFRCLILGQNTIVENCGLGMAKMCDDCEGAWK. Disulfide bonds link Cys-288/Cys-311 and Cys-300/Cys-308. The chain crosses the membrane as a helical span at residues 317–337; it reads TFLAYSFFNICDNLITSFIID. Residues 338–345 are Cytoplasmic-facing; it reads KFSTMTYT. Residues 346–366 form a helical membrane-spanning segment; sequence IVSCIQGPAIAIAYYFKFLAG. Over 367–376 the chain is Vacuolar; the sequence is DAVMKPRVLD. Residues 377 to 397 form a helical membrane-spanning segment; it reads FVTLFGYLFGSIIYRVGNIIL. Topologically, residues 398-424 are cytoplasmic; the sequence is EKKKMMEAGNDDDSEGELTNAESIITQ.

Belongs to the CRT-like transporter family.

It is found in the vacuole membrane. Nutrient transporter. Involved in maintaining the osmotic homeostasis of the digestive vacuole. The sequence is that of Putative chloroquine resistance transporter from Plasmodium knowlesi.